A 1809-amino-acid polypeptide reads, in one-letter code: Pyochelin synthetase PchF (1809 aa).

Residues F69–P490 are condensation/cyclization. The adenylation stretch occupies residues F520–R915. The region spanning A1407 to P1488 is the Carrier domain. Position 1442 is an O-(pantetheine 4'-phosphoryl)serine (S1442). A thioesterase region spans residues L1584–Q1797.

Belongs to the NRP synthetase family. Requires pantetheine 4'-phosphate as cofactor.

The catalysed reaction is holo-[peptidyl-carrier protein] + L-cysteine + ATP = L-cysteinyl-[peptidyl-carrier protein] + AMP + diphosphate. It participates in siderophore biosynthesis. Its function is as follows. Involved in the biosynthesis of the siderophore pyochelin. Adenylates L-cysteine and loads it onto its peptidyl carrier domain via a thioester linkage to the phosphopanthetheine moiety. Then forms a peptide bond between the salicyl-thiazolinyl intermediate bound to the second carrier domain of PchE and the cysteine bound to its own peptidyl carrier domain to form the salicyl-thiazolinyl-cysteinyl-S-PCP2 intermediate. It subsequently cyclizes the C-terminal cysteine to form the second thiazoline heterocycle in the salicyl-thiazolinyl-thiazolinyl-S-PCP2 intermediate. When this intermediate is released by the action of a thioesterase, it produces the tricyclic acid hydroxyphenyl-thiazolyl-thiazolinyl-carboxylic acid (HPTT-COOH), an advanced intermediate containing the aryl-4,2-bis-heterocyclic skeleton of the bithiazoline class of siderophores. This is Pyochelin synthetase PchF from Pseudomonas aeruginosa (strain ATCC 15692 / DSM 22644 / CIP 104116 / JCM 14847 / LMG 12228 / 1C / PRS 101 / PAO1).